Consider the following 158-residue polypeptide: NADPH-dependent 7-cyano-7-deazaguanine reductase (158 aa).

The active-site Thioimide intermediate is the C56. The active-site Proton donor is the D63. Residues 78–80 (VES) and 97–98 (HE) each bind substrate.

Belongs to the GTP cyclohydrolase I family. QueF type 1 subfamily.

The protein resides in the cytoplasm. It carries out the reaction 7-aminomethyl-7-carbaguanine + 2 NADP(+) = 7-cyano-7-deazaguanine + 2 NADPH + 3 H(+). The protein operates within tRNA modification; tRNA-queuosine biosynthesis. Functionally, catalyzes the NADPH-dependent reduction of 7-cyano-7-deazaguanine (preQ0) to 7-aminomethyl-7-deazaguanine (preQ1). In Rhodopseudomonas palustris (strain BisB5), this protein is NADPH-dependent 7-cyano-7-deazaguanine reductase.